A 595-amino-acid polypeptide reads, in one-letter code: Coiled-coil domain-containing protein 22 (595 aa).

The tract at residues 1 to 321 (MEEADRILIH…VSDVPATSQR (321 aa)) is sufficient for interaction with COMMD1. Residues 1–447 (MEEADRILIH…LQDCRELESS (447 aa)) are sufficicient and required for interaction with CCDC93. Residues 218–230 (TGRDRAGDEDWGH) show a composition bias toward basic and acidic residues. The interval 218–243 (TGRDRAGDEDWGHRTSRLPAQEDTRA) is disordered. A coiled-coil region spans residues 323-369 (EQDTWAAQEQELESLREQLEGVNHNIEEVEANMKTLGINLVQVETEC). The residue at position 410 (Ser410) is a Phosphoserine. Coiled-coil stretches lie at residues 447-484 (SRRLAEIQELHQSVRAAAEEARRKEEVYKQLVSELETL) and 564-595 (GKKTLSNLDKIREDYRALRQENAGLLGRVREA).

This sequence belongs to the CCDC22 family. As to quaternary structure, component of the commander complex consisting of the CCC subcomplex and the retriever subcomplex. Component of the CCC (COMMD/CCDC22/CCDC93) subcomplex consisting of COMMD1, COMMD2, COMMD3, COMMD4, COMMD5, COMMD6, COMMD7, COMMD8, COMMD9, COMMD10, CCDC22 and CCDC93. Forms a coiled-coil heterodimer with CCDC22; this heterodimer interacts with the guanine nucleotide exchange factor DENND10; the interaction is direct. Interacts with CUL1, CUL2, CUL3, SKP1, BTRC. Interacts with SNX17 and SNX31. Interacts with CPNE1 and CPNE4.

Its subcellular location is the endosome. The protein resides in the cytoplasm. It is found in the cytoskeleton. It localises to the microtubule organizing center. The protein localises to the centrosome. Functionally, component of the commander complex that is essential for endosomal recycling of transmembrane cargos; the Commander complex is composed of composed of the CCC subcomplex and the retriever subcomplex. Component of the CCC complex, which is involved in the regulation of endosomal recycling of surface proteins, including integrins, signaling receptor and channels. Involved in regulation of NF-kappa-B signaling. Promotes ubiquitination of I-kappa-B-kinase subunit IKBKB and its subsequent proteasomal degradation leading to NF-kappa-B activation; the function may involve association with COMMD8 and a CUL1-dependent E3 ubiquitin ligase complex. May down-regulate NF-kappa-B activity via association with COMMD1 and involving a CUL2-dependent E3 ubiquitin ligase complex. Regulates the cellular localization of COMM domain-containing proteins, such as COMMD1 and COMMD10. Component of the CCC complex, which is involved in the regulation of endosomal recycling of surface proteins, including integrins, signaling receptor and channels. The CCC complex associates with SNX17, retriever and WASH complexes to prevent lysosomal degradation and promote cell surface recycling of numerous cargos such as integrins ITGA5:ITGB1. Plays a role in copper ion homeostasis. Involved in copper-dependent ATP7A trafficking between the trans-Golgi network and vesicles in the cell periphery; the function is proposed to depend on its association within the CCC complex and cooperation with the WASH complex on early endosomes. This chain is Coiled-coil domain-containing protein 22 (CCDC22), found in Bos taurus (Bovine).